A 244-amino-acid chain; its full sequence is Ribosome maturation factor RimM (244 aa).

The tract at residues 1–58 (MSERDSGSSGPVKAKAAAPRAKTSGQAPFGAFVRKPVEKTEGKAKANAANAGSGATEM) is disordered. A compositionally biased stretch (low complexity) spans 13–22 (KAKAAAPRAK). Positions 35–44 (KPVEKTEGKA) are enriched in basic and acidic residues. Positions 45-57 (KANAANAGSGATE) are enriched in low complexity. The PRC barrel domain occupies 163–244 (ADEFYWVDLL…QITVDWEADY (82 aa)).

The protein belongs to the RimM family. In terms of assembly, binds ribosomal protein uS19.

It is found in the cytoplasm. An accessory protein needed during the final step in the assembly of 30S ribosomal subunit, possibly for assembly of the head region. Essential for efficient processing of 16S rRNA. May be needed both before and after RbfA during the maturation of 16S rRNA. It has affinity for free ribosomal 30S subunits but not for 70S ribosomes. The polypeptide is Ribosome maturation factor RimM (Paraburkholderia xenovorans (strain LB400)).